A 322-amino-acid chain; its full sequence is Beta-ketoacyl-[acyl-carrier-protein] synthase III (322 aa).

Catalysis depends on residues Cys-113 and His-249. An ACP-binding region spans residues 250 to 254 (QANVR). Residue Asn-279 is part of the active site.

This sequence belongs to the thiolase-like superfamily. FabH family. As to quaternary structure, homodimer.

It localises to the cytoplasm. It carries out the reaction malonyl-[ACP] + acetyl-CoA + H(+) = 3-oxobutanoyl-[ACP] + CO2 + CoA. It participates in lipid metabolism; fatty acid biosynthesis. Functionally, catalyzes the condensation reaction of fatty acid synthesis by the addition to an acyl acceptor of two carbons from malonyl-ACP. Catalyzes the first condensation reaction which initiates fatty acid synthesis and may therefore play a role in governing the total rate of fatty acid production. Possesses both acetoacetyl-ACP synthase and acetyl transacylase activities. Its substrate specificity determines the biosynthesis of branched-chain and/or straight-chain of fatty acids. The polypeptide is Beta-ketoacyl-[acyl-carrier-protein] synthase III (Anaplasma marginale (strain St. Maries)).